The chain runs to 1187 residues: DENN domain and WD repeat-containing protein SCD1 (1187 aa).

The 161-residue stretch at 19–179 (TVDGDLGFHG…NVPLPTPGKD (161 aa)) folds into the uDENN domain. One can recognise a cDENN domain in the interval 199-330 (SLPQADISLQ…EFSTLRNDIL (132 aa)). The dDENN domain occupies 332–437 (LLHPNVVAID…ERRLSSDEKS (106 aa)). Disordered regions lie at residues 508-536 (SGALESNGRHPPSSPPGKNTKEDNFSSME) and 765-793 (SAGLPSPRPKDVSVSDETQQPSEASGRSW). Positions 526–536 (NTKEDNFSSME) are enriched in basic and acidic residues. A compositionally biased stretch (polar residues) spans 779-793 (SDETQQPSEASGRSW). WD repeat units lie at residues 841–892 (GHGG…SELR), 897–934 (GHTGTVRAISSDRGKIVSGSDDLSVIVWDKQTTQLLEE), 937–975 (GHDSQVSCVKMLSGERVLTAAHDGTVKMWDVRTDMCVAT), 978–1017 (RCSSAILSLEYDDSTGILAAAGRDTVANIWDIRSGKQMHK), 1020–1057 (GHTKWIRSIRMVEDTLITGSDDWTARVWSVSRGSCDAV), 1060–1099 (CHAGPVQSVEYSPFDKGIITGSADGLLRFWENDEGGIKCV), 1104–1141 (LHSSSILSINAGENWLGIGAADNSMSLFHRPSNAGTKV), and 1152–1187 (RTAAVVRCVASDLERKRICSGGRNGVLRLWDATINI).

Interacts with FLS2. Expressed in roots, rosette and cauline leaves, buds and flowers.

It localises to the cell membrane. The protein resides in the cytoplasmic vesicle. The protein localises to the clathrin-coated vesicle. In terms of biological role, involved in growth and development through its role in cytokinesis and polarized cell expansion. Required for plasma membrane internalization. May function in clathrin-mediated membrane trafficking, including plasma membrane endocytosis, essential to both cytokinesis and cell expansion. Acts as a negative regulator of basal resistance against bacteria. In Arabidopsis thaliana (Mouse-ear cress), this protein is DENN domain and WD repeat-containing protein SCD1.